The chain runs to 402 residues: 2-pyrone synthase (402 aa).

Acetoacetyl-CoA is bound by residues Lys60, Arg63, Cys169, Leu272, Arg274, Gly310, Arg312, and Ala313. Cys169 is a catalytic residue.

The protein belongs to the thiolase-like superfamily. Chalcone/stilbene synthases family. As to expression, expressed in both vegetative and reproductive organs. The expression is strong in the leaf, scape (the inflorescence stem) and corolla (both in the ligule and the unpigmented tube), moderate in the bract and carpel, detectable in the root and pappus but not detectable in the stamen.

The enzyme catalyses 2 malonyl-CoA + acetyl-CoA + 2 H(+) = triacetate lactone + 2 CO2 + 3 CoA. Its function is as follows. Polyketide synthase, which uses acetyl-CoA and two condensation reactions with malonyl-CoA to form triacetic acid lactone (also called methylpyrone), a precursor of phytoalexin. May participate in insect and pathogen resistance. The polypeptide is 2-pyrone synthase (Gerbera hybrida (Daisy)).